Reading from the N-terminus, the 376-residue chain is Chaperone protein DnaJ (376 aa).

The J domain occupies 5 to 70; the sequence is DYYEVLGVGR…DKKAAYDQFG (66 aa). The CR-type zinc finger occupies 132 to 210; sequence GLTKELRIPT…CHGEGRVEKS (79 aa). Residues cysteine 145, cysteine 148, cysteine 162, cysteine 165, cysteine 184, cysteine 187, cysteine 198, and cysteine 201 each contribute to the Zn(2+) site. CXXCXGXG motif repeat units follow at residues 145 to 152, 162 to 169, 184 to 191, and 198 to 205; these read CDSCDGSG, CGTCHGQG, CPTCHGRG, and CNKCHGEG.

It belongs to the DnaJ family. Homodimer. Requires Zn(2+) as cofactor.

It is found in the cytoplasm. Its function is as follows. Participates actively in the response to hyperosmotic and heat shock by preventing the aggregation of stress-denatured proteins and by disaggregating proteins, also in an autonomous, DnaK-independent fashion. Unfolded proteins bind initially to DnaJ; upon interaction with the DnaJ-bound protein, DnaK hydrolyzes its bound ATP, resulting in the formation of a stable complex. GrpE releases ADP from DnaK; ATP binding to DnaK triggers the release of the substrate protein, thus completing the reaction cycle. Several rounds of ATP-dependent interactions between DnaJ, DnaK and GrpE are required for fully efficient folding. Also involved, together with DnaK and GrpE, in the DNA replication of plasmids through activation of initiation proteins. This is Chaperone protein DnaJ from Shewanella pealeana (strain ATCC 700345 / ANG-SQ1).